The sequence spans 353 residues: Heterogeneous nuclear ribonucleoproteins A2/B1 (353 aa).

The residue at position 1 (Met1) is an N-acetylmethionine. Thr4 carries the phosphothreonine modification. Residue Leu5 forms a Glycyl lysine isopeptide (Lys-Gly) (interchain with G-Cter in SUMO2) linkage. Positions 9–15 match the Nuclear localization signal motif; sequence PLERKKR. RRM domains are found at residues 21-104 and 112-191; these read RKLF…ESGK and KKLF…LSRQ. A Glycyl lysine isopeptide (Lys-Gly) (interchain with G-Cter in SUMO2) cross-link involves residue Lys22. Ser29 is modified (phosphoserine). At Arg38 the chain carries Omega-N-methylarginine. Ser85 is subject to Phosphoserine. Lys104 bears the N6,N6-dimethyllysine; alternate mark. Lys104 participates in a covalent cross-link: Glycyl lysine isopeptide (Lys-Gly) (interchain with G-Cter in SUMO2); alternate. Residues Lys112, Lys120, and Lys137 each participate in a glycyl lysine isopeptide (Lys-Gly) (interchain with G-Cter in SUMO2) cross-link. Thr140 bears the Phosphothreonine mark. Position 149 is a phosphoserine (Ser149). Lys152 participates in a covalent cross-link: Glycyl lysine isopeptide (Lys-Gly) (interchain with G-Cter in SUMO2). Thr159 is modified (phosphothreonine). Glycyl lysine isopeptide (Lys-Gly) (interchain with G-Cter in SUMO2); alternate cross-links involve residues Lys168 and Lys173. 2 positions are modified to N6-acetyllysine; alternate: Lys168 and Lys173. Residue Thr176 is modified to Phosphothreonine. Residue Lys186 forms a Glycyl lysine isopeptide (Lys-Gly) (interchain with G-Cter in SUMO2) linkage. A phosphoserine mark is found at Ser189 and Ser201. Residues 193–353 are disordered; that stretch reads MQEVQSSRSG…SGGYGGRSRY (161 aa). A compositionally biased stretch (gly residues) spans 202-223; that stretch reads GRGGNFGFGDSRGGGGNFGPGP. Position 203 is an asymmetric dimethylarginine; alternate (Arg203). Arg203 bears the Dimethylated arginine; alternate mark. The residue at position 203 (Arg203) is an Omega-N-methylarginine; alternate. At Ser212 the chain carries Phosphoserine. Arg213 carries the post-translational modification Asymmetric dimethylarginine; alternate. Arg213 carries the dimethylated arginine; alternate modification. Arg213 bears the Omega-N-methylarginine; alternate mark. Ser225 carries the phosphoserine modification. An Omega-N-methylarginine modification is found at Arg228. Ser231 and Ser236 each carry phosphoserine. Arg238 is modified (omega-N-methylarginine). Ser259 carries the phosphoserine modification. Asymmetric dimethylarginine; alternate is present on Arg266. Arg266 bears the Omega-N-methylarginine; alternate mark. Residues 308 to 347 are nuclear targeting sequence; sequence QQPSNYGPMKSGNFGGSRNMGGPYGGGNYGPGGSGGSGGY. Residues 320 to 353 show a composition bias toward gly residues; sequence NFGGSRNMGGPYGGGNYGPGGSGGSGGYGGRSRY. The residue at position 324 (Ser324) is a Phosphoserine. Arg325 carries the omega-N-methylarginine modification. Tyr331 bears the Phosphotyrosine mark. Residues Ser341 and Ser344 each carry the phosphoserine modification. A Phosphotyrosine modification is found at Tyr347. Arg350 carries the post-translational modification Omega-N-methylarginine.

Homodimer; dimerization is required for nucleocytoplasmic translocation. Identified in the spliceosome C complex. Identified in a IGF2BP1-dependent mRNP granule complex containing untranslated mRNAs. Interacts with IGF2BP1. Interacts with C9orf72. Interacts with DGCR8. Interacts with TARDBP. Interacts with CKAP5. Interacts with TBK1. Interacts with STING1. Interacts with SRC. Interacts with PPIA/CYPA. Interacts (via C-terminus) with FAM76B; the interaction results in retention of HNRNPA2B1 in the nucleus and inhibition of the NF-kappa-B-mediated inflammatory pathway. Interacts with NF-kappa-B inhibitors NFKBIA and NFKBIE; the interaction may be mediated by the RRM2 domain of HNRNPA2B1, and HNRNPA2B1 may interact simultaneously with FAM76B and either NFKBIA or NFKBIE to form a complex. In terms of processing, sumoylated in exosomes, promoting miRNAs-binding. Post-translationally, asymmetric dimethylation at Arg-266 constitutes the major methylation site. According to a report, methylation affects subcellular location and promotes nuclear localization. According to another report, methylation at Arg-266 does not influence nucleocytoplasmic shuttling.

Its subcellular location is the nucleus. It localises to the nucleoplasm. The protein localises to the cytoplasm. The protein resides in the cytoplasmic granule. It is found in the secreted. Its subcellular location is the extracellular exosome. Its function is as follows. Heterogeneous nuclear ribonucleoprotein (hnRNP) that associates with nascent pre-mRNAs, packaging them into hnRNP particles. The hnRNP particle arrangement on nascent hnRNA is non-random and sequence-dependent and serves to condense and stabilize the transcripts and minimize tangling and knotting. Packaging plays a role in various processes such as transcription, pre-mRNA processing, RNA nuclear export, subcellular location, mRNA translation and stability of mature mRNAs. Forms hnRNP particles with at least 20 other different hnRNP and heterogeneous nuclear RNA in the nucleus. Involved in transport of specific mRNAs to the cytoplasm in oligodendrocytes and neurons: acts by specifically recognizing and binding the A2RE (21 nucleotide hnRNP A2 response element) or the A2RE11 (derivative 11 nucleotide oligonucleotide) sequence motifs present on some mRNAs, and promotes their transport to the cytoplasm. Specifically binds single-stranded telomeric DNA sequences, protecting telomeric DNA repeat against endonuclease digestion. Also binds other RNA molecules, such as primary miRNA (pri-miRNAs): acts as a nuclear 'reader' of the N6-methyladenosine (m6A) mark by specifically recognizing and binding a subset of nuclear m6A-containing pri-miRNAs. Binding to m6A-containing pri-miRNAs promotes pri-miRNA processing by enhancing binding of DGCR8 to pri-miRNA transcripts. Involved in miRNA sorting into exosomes following sumoylation, possibly by binding (m6A)-containing pre-miRNAs. Acts as a regulator of efficiency of mRNA splicing, possibly by binding to m6A-containing pre-mRNAs. Plays a role in the splicing of pyruvate kinase PKM by binding repressively to sequences flanking PKM exon 9, inhibiting exon 9 inclusion and resulting in exon 10 inclusion and production of the PKM M2 isoform. Also plays a role in the activation of the innate immune response. Mechanistically, senses the presence of viral DNA in the nucleus, homodimerizes and is demethylated by JMJD6. In turn, translocates to the cytoplasm where it activates the TBK1-IRF3 pathway, leading to interferon alpha/beta production. Functionally, (Microbial infection) Involved in the transport of HIV-1 genomic RNA out of the nucleus, to the microtubule organizing center (MTOC), and then from the MTOC to the cytoplasm: acts by specifically recognizing and binding the A2RE (21 nucleotide hnRNP A2 response element) sequence motifs present on HIV-1 genomic RNA, and promotes its transport. In Homo sapiens (Human), this protein is Heterogeneous nuclear ribonucleoproteins A2/B1 (HNRNPA2B1).